Consider the following 132-residue polypeptide: MSKSLTIIWQYLRAFVLIYACLYAGIFIAGLLPITIPGSIIGMLILFVLLALQIMPPQWVNPGCNILIRYMALLFVPIGVGVMQYWDLLRAQLGPVVISCAISTLVVFVVVSWSSHLVHGERKVIGQKGKEE.

4 consecutive transmembrane segments (helical) span residues Leu-5 to Gly-25, Gly-38 to Val-60, Ile-66 to Trp-86, and Leu-93 to Trp-113.

The protein belongs to the UPF0299 family.

The protein localises to the cell inner membrane. The protein is UPF0299 membrane protein KPN78578_25390 of Klebsiella pneumoniae subsp. pneumoniae (strain ATCC 700721 / MGH 78578).